Consider the following 418-residue polypeptide: Acyltransferase calJ (418 aa).

Catalysis depends on Ser79, which acts as the Acyl-ester intermediate. Residues Arg176 and Tyr191 each contribute to the substrate site.

This sequence belongs to the class-A beta-lactamase family.

It functions in the pathway secondary metabolite biosynthesis. Acyltransferase; part of the gene cluster that mediates the biosynthesis of calbistrin A and related compounds. Calbistrin A is a secondary metabolite with an interesting structure that was recently found to have bioactivity against leukemia cells. It consists of two polyketides linked by an ester bond: a bicyclic decalin containing polyketide and a linear 12 carbon dioic acid structure. The polyketide synthase calA is probably responsible for forming the decalin moiety. Because calA lacks a designated enoylreductase (ER) domain, the required activity is provided by the trans-enoyl reductase calK. Following release from the PKS, calF then probably catalyzes the oxidation and the subsequent Diels Alder cycloisomerization that lead to the formation of the decalin moiety. The decalin polyketide backbone includes two C-methyl groups, at C7 and C11 in backbone, of which the C7 position is probably methylated by the methyltransferase domain of calA. A candidate for adding the methyl group at C11, if not done by CalA, is the cluster methyltransferase calH. Several additional tailoring enzymes within the cluster could be involved in the modification of the decalin polyketide product. Those include the 3 cytochrome P450 monooxygenases CalE, CalG and CalL, of which one might be responsible for the introduction of the extra hydroxyl group attached to the backbone of the decalin moiety, at position C9 in the backbone, that allows for attachment of the linear moiety. One tailoring enzyme activity that is expected to be involved in biosynthesis of calbistrin is an acyltransferase for connecting the two polyketide synthase products, and which could be performed by the cluster acyltransferase calJ. The enzyme responsible for the biosynthesis of the linear moiety, probably a second PKS, has not been identified yet. This chain is Acyltransferase calJ, found in Penicillium decumbens.